A 367-amino-acid polypeptide reads, in one-letter code: 3-dehydroquinate synthase (367 aa).

NAD(+) contacts are provided by residues 111–115 (GVVGD), 135–136 (TS), Lys-148, Lys-157, and 175–178 (TLDT). Zn(2+) contacts are provided by Glu-190, His-254, and His-271.

This sequence belongs to the sugar phosphate cyclases superfamily. Dehydroquinate synthase family. Requires Co(2+) as cofactor. Zn(2+) is required as a cofactor. It depends on NAD(+) as a cofactor.

Its subcellular location is the cytoplasm. The catalysed reaction is 7-phospho-2-dehydro-3-deoxy-D-arabino-heptonate = 3-dehydroquinate + phosphate. It participates in metabolic intermediate biosynthesis; chorismate biosynthesis; chorismate from D-erythrose 4-phosphate and phosphoenolpyruvate: step 2/7. Its function is as follows. Catalyzes the conversion of 3-deoxy-D-arabino-heptulosonate 7-phosphate (DAHP) to dehydroquinate (DHQ). In Salinibacter ruber (strain DSM 13855 / M31), this protein is 3-dehydroquinate synthase.